Here is a 249-residue protein sequence, read N- to C-terminus: Chitooligosaccharide deacetylase (249 aa).

Residues His-61 and His-125 each coordinate Mg(2+).

Belongs to the YdjC deacetylase family. ChbG subfamily. In terms of assembly, homodimer. It depends on Mg(2+) as a cofactor.

It localises to the cytoplasm. It carries out the reaction N,N'-diacetylchitobiose + H2O = N-acetyl-beta-D-glucosaminyl-(1-&gt;4)-D-glucosamine + acetate. It catalyses the reaction diacetylchitobiose-6'-phosphate + H2O = N'-monoacetylchitobiose-6'-phosphate + acetate. Its pathway is glycan degradation; chitin degradation. Functionally, involved in the degradation of chitin. ChbG is essential for growth on the acetylated chitooligosaccharides chitobiose and chitotriose but is dispensable for growth on cellobiose and chitosan dimer, the deacetylated form of chitobiose. Deacetylation of chitobiose-6-P and chitotriose-6-P is necessary for both the activation of the chb promoter by the regulatory protein ChbR and the hydrolysis of phosphorylated beta-glucosides by the phospho-beta-glucosidase ChbF. Catalyzes the removal of only one acetyl group from chitobiose-6-P to yield monoacetylchitobiose-6-P, the inducer of ChbR and the substrate of ChbF. This is Chitooligosaccharide deacetylase from Escherichia coli O17:K52:H18 (strain UMN026 / ExPEC).